The chain runs to 351 residues: Uroporphyrinogen decarboxylase (351 aa).

Residues Arg-25–Arg-29, Asp-74, Tyr-151, Ser-206, and His-325 each bind substrate.

The protein belongs to the uroporphyrinogen decarboxylase family. As to quaternary structure, homodimer.

The protein localises to the cytoplasm. It catalyses the reaction uroporphyrinogen III + 4 H(+) = coproporphyrinogen III + 4 CO2. It participates in porphyrin-containing compound metabolism; protoporphyrin-IX biosynthesis; coproporphyrinogen-III from 5-aminolevulinate: step 4/4. Its function is as follows. Catalyzes the decarboxylation of four acetate groups of uroporphyrinogen-III to yield coproporphyrinogen-III. The chain is Uroporphyrinogen decarboxylase from Chlorobaculum parvum (strain DSM 263 / NCIMB 8327) (Chlorobium vibrioforme subsp. thiosulfatophilum).